Here is a 614-residue protein sequence, read N- to C-terminus: Vitamin B12 transporter BtuB (614 aa).

Positions Met1–Ala20 are cleaved as a signal peptide. The short motif at Asp26–Asn33 is the TonB box element. One can recognise a TBDR plug domain in the interval Pro38–Thr152. Cyanocob(III)alamin-binding positions include Leu83, Ser85, Asn92, and Val110 to Ser111. A TBDR beta-barrel domain is found at His155–Phe614. 3 consecutive transmembrane segments (beta stranded) span residues Thr158 to Gly165, Tyr169 to Gln178, and Thr184 to Thr195. Residues Asp199, Gln211, Asp213, and Asp215 each coordinate Ca(2+). The next 2 membrane-spanning stretches (beta stranded) occupy residues Phe217–Glu227 and Asp232–Asn248. Positions 249 and 250 each coordinate Ca(2+). Position 251 (Ala251) interacts with cyanocob(III)alamin. A Ca(2+)-binding site is contributed by Asp261. Beta stranded transmembrane passes span Arg263 to Asn277, Glu279 to Asn296, Thr309 to Ile325, His328 to Trp337, Tyr353 to Gly369, Phe371 to Asp381, Phe385 to Ile400, Tyr403 to Asn417, Lys434 to Glu443, Val449 to Asn458, Tyr473 to Phe490, Pro494 to Ala509, Arg517 to Trp529, and Asp535 to Asp550. Residue Thr309 coordinates cyanocob(III)alamin. Arg517 contacts cyanocob(III)alamin. Residue Tyr551 participates in cyanocob(III)alamin binding. A run of 3 beta stranded transmembrane segments spans residues Thr558–Ala572, Ile585–Val596, and Ala602–Phe614. Positions Tyr597–Phe614 match the TonB C-terminal box motif.

Belongs to the TonB-dependent receptor family. BtuB (TC 1.B.14.3.1) subfamily.

Its subcellular location is the cell outer membrane. Its function is as follows. Involved in the active translocation of vitamin B12 (cyanocobalamin) across the outer membrane to the periplasmic space. It derives its energy for transport by interacting with the trans-periplasmic membrane protein TonB. In Escherichia coli O6:H1 (strain CFT073 / ATCC 700928 / UPEC), this protein is Vitamin B12 transporter BtuB.